A 193-amino-acid polypeptide reads, in one-letter code: ECF RNA polymerase sigma factor SigK (193 aa).

Positions 35 to 101 (LYDRTRSRVY…RRAVDRVRSE (67 aa)) are sigma-70 factor domain-2. The Polymerase core binding signature appears at 59-62 (ETTQ). Residues 140–187 (MGSLSDLQREAIQLAYYEGLTYVQVSERLSANLATIKSRMRGGIRGLK) form a sigma-70 factor domain-4 region. A DNA-binding region (H-T-H motif) is located at residues 161 to 180 (YVQVSERLSANLATIKSRMR).

It belongs to the sigma-70 factor family. ECF subfamily. In terms of assembly, interacts transiently with the RNA polymerase catalytic core formed by RpoA, RpoB, RpoC and RpoZ (2 alpha, 1 beta, 1 beta' and 1 omega subunit) to form the RNA polymerase holoenzyme that can initiate transcription. Interacts (via sigma-70 factor domain 4) with anti-sigma-K factor RskA.

In terms of biological role, sigma factors are initiation factors that promote the attachment of RNA polymerase to specific initiation sites and are then released. Extracytoplasmic function (ECF) sigma factors are held in an inactive form by an anti-sigma factor until released by regulated intramembrane proteolysis. This is ECF RNA polymerase sigma factor SigK (sigK) from Mycobacterium sp. (strain KMS).